Here is a 545-residue protein sequence, read N- to C-terminus: Glucans biosynthesis protein G (545 aa).

A signal peptide spans 1–34 (MVSLLRCQSFKPSSSLICSLALSAAFALSSSAFA). The interval 38–60 (KPAENKPATPVVSPPKATAQPAN) is disordered.

This sequence belongs to the OpgD/OpgG family.

The protein localises to the periplasm. It functions in the pathway glycan metabolism; osmoregulated periplasmic glucan (OPG) biosynthesis. Functionally, involved in the biosynthesis of osmoregulated periplasmic glucans (OPGs). This chain is Glucans biosynthesis protein G, found in Shewanella sp. (strain ANA-3).